The sequence spans 148 residues: Transcription antitermination protein NusB (148 aa).

The protein belongs to the NusB family.

In terms of biological role, involved in transcription antitermination. Required for transcription of ribosomal RNA (rRNA) genes. Binds specifically to the boxA antiterminator sequence of the ribosomal RNA (rrn) operons. In Nitrosococcus oceani (strain ATCC 19707 / BCRC 17464 / JCM 30415 / NCIMB 11848 / C-107), this protein is Transcription antitermination protein NusB.